The following is a 338-amino-acid chain: Ketol-acid reductoisomerase (NADP(+)) (338 aa).

The region spanning 1–181 (MQVYYDKDAD…GGGRAGVIET (181 aa)) is the KARI N-terminal Rossmann domain. Residues 24-27 (YGSQ), Arg-47, Ser-50, Ser-52, and 82-85 (DEHQ) contribute to the NADP(+) site. Residue His-107 is part of the active site. Gly-133 serves as a coordination point for NADP(+). A KARI C-terminal knotted domain is found at 182-327 (SFREETETDL…ERLRGMMPWI (146 aa)). Residues Asp-190, Glu-194, Glu-226, and Glu-230 each coordinate Mg(2+). Position 251 (Ser-251) interacts with substrate.

This sequence belongs to the ketol-acid reductoisomerase family. Mg(2+) is required as a cofactor.

It catalyses the reaction (2R)-2,3-dihydroxy-3-methylbutanoate + NADP(+) = (2S)-2-acetolactate + NADPH + H(+). It carries out the reaction (2R,3R)-2,3-dihydroxy-3-methylpentanoate + NADP(+) = (S)-2-ethyl-2-hydroxy-3-oxobutanoate + NADPH + H(+). The protein operates within amino-acid biosynthesis; L-isoleucine biosynthesis; L-isoleucine from 2-oxobutanoate: step 2/4. It participates in amino-acid biosynthesis; L-valine biosynthesis; L-valine from pyruvate: step 2/4. Its function is as follows. Involved in the biosynthesis of branched-chain amino acids (BCAA). Catalyzes an alkyl-migration followed by a ketol-acid reduction of (S)-2-acetolactate (S2AL) to yield (R)-2,3-dihydroxy-isovalerate. In the isomerase reaction, S2AL is rearranged via a Mg-dependent methyl migration to produce 3-hydroxy-3-methyl-2-ketobutyrate (HMKB). In the reductase reaction, this 2-ketoacid undergoes a metal-dependent reduction by NADPH to yield (R)-2,3-dihydroxy-isovalerate. This chain is Ketol-acid reductoisomerase (NADP(+)), found in Alkalilimnicola ehrlichii (strain ATCC BAA-1101 / DSM 17681 / MLHE-1).